Here is a 288-residue protein sequence, read N- to C-terminus: Fructose-bisphosphate aldolase (288 aa).

Residue Ser-49 participates in D-glyceraldehyde 3-phosphate binding. Asp-84 acts as the Proton donor in catalysis. Residues His-85, Asp-105, Glu-135, and His-177 each coordinate Zn(2+). Gly-178 contributes to the dihydroxyacetone phosphate binding site. His-206 contacts Zn(2+). Dihydroxyacetone phosphate contacts are provided by residues 207–209 (GGS) and 228–231 (NINT).

This sequence belongs to the class II fructose-bisphosphate aldolase family. Homodimer. The cofactor is Zn(2+).

It carries out the reaction beta-D-fructose 1,6-bisphosphate = D-glyceraldehyde 3-phosphate + dihydroxyacetone phosphate. The protein operates within carbohydrate degradation; glycolysis; D-glyceraldehyde 3-phosphate and glycerone phosphate from D-glucose: step 4/4. In terms of biological role, catalyzes the aldol condensation of dihydroxyacetone phosphate (DHAP or glycerone-phosphate) with glyceraldehyde 3-phosphate (G3P) to form fructose 1,6-bisphosphate (FBP) in gluconeogenesis and the reverse reaction in glycolysis. This is Fructose-bisphosphate aldolase (fba) from Mycoplasma genitalium (strain ATCC 33530 / DSM 19775 / NCTC 10195 / G37) (Mycoplasmoides genitalium).